Here is a 433-residue protein sequence, read N- to C-terminus: MAFEFRLPDIGEGIHEGEIVKWFIKAGDTIEEDDVLAEVQNDKSVVEIPSPVSGTVEEVLVDEGTVAVVGDVIVKIDAPDAEEMQFKGHGDDEDSKKEEKEQESPVQEEASSTQSQEKTEVDESKTVKAMPSVRKYARENGVNIKAVNGSGKNGRITKEDIDAYLNGGSSEEGSNTSVASESTSSDVVNASATQALPEGDFPETTEKIPAMRKAIAKAMVNSKHTAPHVTLMDEIDVQELWDHRKKFKEIAAEQGTKLTFLPYVVKALVSALKKYPALNTSFNEEAGEVVHKHYWNIGIAADTDKGLLVPVVKHADRKSIFEISDEINELAVKARDGKLTSEEMKGATCTISNIGSAGGQWFTPVINHPEVAILGIGRIAQKPIVKDGEIVAAPVLALSLSFDHRQIDGATGQNAMNHIKRLLNNPELLLMEG.

In terms of domain architecture, Lipoyl-binding spans 2–77 (AFEFRLPDIG…VVGDVIVKID (76 aa)). The residue at position 43 (Lys-43) is an N6-lipoyllysine. Disordered stretches follow at residues 80 to 134 (DAEE…PSVR) and 164 to 204 (YLNG…FPET). 2 stretches are compositionally biased toward basic and acidic residues: residues 84-103 (MQFK…KEQE) and 117-126 (EKTEVDESKT). In terms of domain architecture, Peripheral subunit-binding (PSBD) spans 128–165 (KAMPSVRKYARENGVNIKAVNGSGKNGRITKEDIDAYL). Positions 166–188 (NGGSSEEGSNTSVASESTSSDVV) are enriched in low complexity. Residue His-404 is part of the active site.

This sequence belongs to the 2-oxoacid dehydrogenase family. In terms of assembly, forms a 24-polypeptide structural core with octahedral symmetry. (R)-lipoate serves as cofactor.

The catalysed reaction is N(6)-[(R)-dihydrolipoyl]-L-lysyl-[protein] + acetyl-CoA = N(6)-[(R)-S(8)-acetyldihydrolipoyl]-L-lysyl-[protein] + CoA. Its function is as follows. The pyruvate dehydrogenase complex catalyzes the overall conversion of pyruvate to acetyl-CoA and CO(2). It contains multiple copies of three enzymatic components: pyruvate dehydrogenase (E1), dihydrolipoamide acetyltransferase (E2) and lipoamide dehydrogenase (E3). The polypeptide is Dihydrolipoyllysine-residue acetyltransferase component of pyruvate dehydrogenase complex (pdhC) (Staphylococcus epidermidis (strain ATCC 12228 / FDA PCI 1200)).